The primary structure comprises 218 residues: Capsid protein (218 aa).

Methionine 1 is modified (N-acetylmethionine; by host). The interval methionine 1–alanine 28 is disordered. Over residues arginine 11–serine 21 the composition is skewed to basic residues.

Belongs to the cucumovirus capsid protein family.

The protein resides in the virion. Functionally, capsid protein. Probably binds RNA and plays a role in packaging. The polypeptide is Capsid protein (Cucumis sativus (Cucumber)).